A 691-amino-acid chain; its full sequence is Serotransferrin-2 (691 aa).

The first 18 residues, 1 to 18, serve as a signal peptide directing secretion; the sequence is MKLLLLSALLGCLATAYA. 2 consecutive Transferrin-like domains span residues 25 to 329 and 340 to 670; these read VKWC…SLKK and IKWC…SLRK. Cysteines 28 and 50 form a disulfide. D74 and Y104 together coordinate Fe(3+). Intrachain disulfides connect C127/C207, C172/C186, and C235/C249. Residues T129, S134, G136, and W137 each coordinate hydrogencarbonate. N169 is a glycosylation site (N-linked (GlcNAc...) asparagine). Y201 is a binding site for Fe(3+). Fe(3+) is bound at residue H257. 2 disulfide bridges follow: C343-C379 and C353-C370. Fe(3+) contacts are provided by D394 and Y428. 7 disulfide bridges follow: C404/C682, C419/C643, C451/C530, C475/C671, C485/C499, C496/C513, and C570/C584. 4 residues coordinate hydrogencarbonate: T453, R457, A459, and G460. Y524 provides a ligand contact to Fe(3+). H592 serves as a coordination point for Fe(3+).

Belongs to the transferrin family. In terms of assembly, monomer. Abundant in liver and serum with smaller amounts found in the stomach and kidney.

It is found in the secreted. Functionally, transferrins are iron binding transport proteins which can bind two Fe(3+) ions in association with the binding of an anion, usually bicarbonate. It is responsible for the transport of iron from sites of absorption and heme degradation to those of storage and utilization. Serum transferrin may also have a further role in stimulating cell proliferation. The polypeptide is Serotransferrin-2 (tf2) (Salmo salar (Atlantic salmon)).